Consider the following 668-residue polypeptide: DNA ligase (668 aa).

Residues 32-36, 81-82, and glutamate 110 each bind NAD(+); these read DSEYD and SL. Lysine 112 serves as the catalytic N6-AMP-lysine intermediate. The NAD(+) site is built by arginine 133, glutamate 167, lysine 283, and lysine 307. Residues cysteine 401, cysteine 404, cysteine 419, and cysteine 424 each contribute to the Zn(2+) site. One can recognise a BRCT domain in the interval 586–668; that stretch reads QTDSEFNGKT…IQKQKEVENK (83 aa).

It belongs to the NAD-dependent DNA ligase family. LigA subfamily. The cofactor is Mg(2+). Requires Mn(2+) as cofactor.

It carries out the reaction NAD(+) + (deoxyribonucleotide)n-3'-hydroxyl + 5'-phospho-(deoxyribonucleotide)m = (deoxyribonucleotide)n+m + AMP + beta-nicotinamide D-nucleotide.. In terms of biological role, DNA ligase that catalyzes the formation of phosphodiester linkages between 5'-phosphoryl and 3'-hydroxyl groups in double-stranded DNA using NAD as a coenzyme and as the energy source for the reaction. It is essential for DNA replication and repair of damaged DNA. In Staphylococcus carnosus (strain TM300), this protein is DNA ligase.